Reading from the N-terminus, the 481-residue chain is WASH complex subunit 1 (481 aa).

The segment at 1–54 (MVRMTQKRYLEGQVYSVPLIQPDLRREEAVHQITDALQYLEMISTDIFTRVSES) is required for WASH complex assembly. Disordered stretches follow at residues 273–417 (SVPA…SGGD) and 429–481 (RRKG…DWEA). Residues 304-341 (APPPPPPPPPPPPEPTHVPVPPPGTSAAPPPPPPPPPM) are compositionally biased toward pro residues. The tract at residues 359–481 (KGAPSEVVQP…AADDEDDWEA (123 aa)) is VCA. One can recognise a WH2 domain in the interval 371–393 (GRASLLESIRNAGGIGKANLRNV). Over residues 392–407 (NVKERKMEKKKQKEQE) the composition is skewed to basic and acidic residues.

Belongs to the WASH1 family. Component of the WASH complex.

Its subcellular location is the early endosome membrane. It is found in the recycling endosome membrane. Functionally, acts as a nucleation-promoting factor at the surface of endosomes, where it recruits and activates the Arp2/3 complex to induce actin polymerization, playing a key role in the fission of tubules that serve as transport intermediates during endosome sorting. In Danio rerio (Zebrafish), this protein is WASH complex subunit 1.